The primary structure comprises 397 residues: uncharacterized protein (397 aa).

9 helical membrane passes run 1–21 (MGAS…LMLV), 39–59 (VIQS…VVVF), 76–96 (EALS…FGVP), 103–123 (VLLF…FVGA), 124–144 (ALIE…LVMA), 194–214 (MMTP…LFAF), 219–239 (ALFG…FSLL), 255–275 (LVYL…KLML), and 301–321 (QSLT…FWSA).

It belongs to the TerC family.

It is found in the cell membrane. This is an uncharacterized protein from Mycobacterium tuberculosis (strain CDC 1551 / Oshkosh).